We begin with the raw amino-acid sequence, 115 residues long: Small ribosomal subunit protein uS17 (115 aa).

The protein belongs to the universal ribosomal protein uS17 family. Part of the 30S ribosomal subunit.

In terms of biological role, one of the primary rRNA binding proteins, it binds specifically to the 5'-end of 16S ribosomal RNA. The polypeptide is Small ribosomal subunit protein uS17 (Granulibacter bethesdensis (strain ATCC BAA-1260 / CGDNIH1)).